Reading from the N-terminus, the 104-residue chain is Nucleoid-associated protein Ccon26_18480 (104 aa).

A compositionally biased stretch (basic and acidic residues) spans 16-34 (DVQKQAKQMEEESKNKEFG). Positions 16–38 (DVQKQAKQMEEESKNKEFGAKSG) are disordered.

This sequence belongs to the YbaB/EbfC family. As to quaternary structure, homodimer.

It is found in the cytoplasm. The protein localises to the nucleoid. Binds to DNA and alters its conformation. May be involved in regulation of gene expression, nucleoid organization and DNA protection. The polypeptide is Nucleoid-associated protein Ccon26_18480 (Campylobacter concisus (strain 13826)).